The chain runs to 387 residues: Exodeoxyribonuclease 7 large subunit (387 aa).

The protein belongs to the XseA family. Heterooligomer composed of large and small subunits.

It localises to the cytoplasm. The catalysed reaction is Exonucleolytic cleavage in either 5'- to 3'- or 3'- to 5'-direction to yield nucleoside 5'-phosphates.. In terms of biological role, bidirectionally degrades single-stranded DNA into large acid-insoluble oligonucleotides, which are then degraded further into small acid-soluble oligonucleotides. In Campylobacter hominis (strain ATCC BAA-381 / DSM 21671 / CCUG 45161 / LMG 19568 / NCTC 13146 / CH001A), this protein is Exodeoxyribonuclease 7 large subunit.